The primary structure comprises 920 residues: Sensor histidine kinase SsrA (920 aa).

The Cytoplasmic segment spans residues 1-19; the sequence is MNLLNLKNTLQTSLVIRLT. The helical transmembrane segment at 20-40 threads the bilayer; it reads FLFLLTTIIIWLLSVLTAAYI. Residues 41 to 291 are Periplasmic-facing; the sequence is SMVQKRQHII…YGNLHNRILK (251 aa). Residues 292–312 form a helical membrane-spanning segment; that stretch reads IILQQIPFTLTALVLMTSAFC. Topologically, residues 313–920 are cytoplasmic; sequence WLLHRSLAKP…RMIFKNYTIT (608 aa). The HAMP domain occupies 317 to 369; it reads RSLAKPLWRFVDVINKTATAPLSTRLPAQRLDELDSIAGAFNQLLDTLQVQYD. The stretch at 354-395 forms a coiled coil; that stretch reads AGAFNQLLDTLQVQYDNLENKVAERTQALNEAKKRAERANKR. In terms of domain architecture, Histidine kinase spans 402–614; the sequence is VISHELRTPM…CVSLVLPLQE (213 aa). Residues His-405 and Asp-549 each contribute to the ATP site. The residue at position 405 (His-405) is a Phosphohistidine; by autocatalysis. The region spanning 690–808 is the Response regulatory domain; the sequence is QILLVDDADI…TLARYISIAA (119 aa). A 4-aspartylphosphate modification is found at Asp-739.

Autophosphorylated.

The protein localises to the cell inner membrane. The enzyme catalyses ATP + protein L-histidine = ADP + protein N-phospho-L-histidine.. In terms of biological role, member of the two-component regulatory system SsrA/SsrB (SpiR/SsrB) that is required for intracellular proliferation and systemic dissemination within the host. When inside acidic Salmonella-containing vesicles (SCV) within host cells the SsrA sensor kinase autophosphorylates and the phosphoryl group is transferred to the response regulator SsrB; phosphorylated SsrB activates the expression of genes encoding virulence proteins, including pathogenicity island 2 (SPI2) and other horizontally acquired genes, and antagonizes the action of transcriptional repressor hns (H-NS). This Salmonella typhimurium (strain LT2 / SGSC1412 / ATCC 700720) protein is Sensor histidine kinase SsrA.